Consider the following 385-residue polypeptide: Transcription factor TGAL3 (385 aa).

The disordered stretch occupies residues 62-113; the sequence is LHALVGGGDGGDDAGEQRGADSSAVSKERRGDQKMQRRLAQNREAARKSRMR. The segment covering 87-96 has biased composition (basic and acidic residues); the sequence is SKERRGDQKM. Residues 93–137 enclose the bZIP domain; the sequence is DQKMQRRLAQNREAARKSRMRKKAYIQQLESSRSKLMHLEQELQR. The segment at 95–115 is basic motif; that stretch reads KMQRRLAQNREAARKSRMRKK. The leucine-zipper stretch occupies residues 121 to 135; the sequence is LESSRSKLMHLEQEL. The DOG1 domain maps to 162-382; the sequence is TLAFDLEYAR…RALSSLWLAR (221 aa).

The protein belongs to the bZIP family. As to quaternary structure, interacts with NPR1/NH1, NPR2/NH2 and NPR3/NH3.

The protein resides in the nucleus. In terms of biological role, transcriptional regulator involved in defense response. This is Transcription factor TGAL3 from Oryza sativa subsp. japonica (Rice).